The following is a 377-amino-acid chain: RIB43A-like with coiled-coils protein 2 (377 aa).

A coiled-coil region spans residues 217 to 246 (NKNQVVELTERKRQEKQQEQEDNMTEITNL). The interval 354–377 (KQMNTASSSQPTEDYFSQFNTRSR) is disordered.

This sequence belongs to the RIB43A family. As to quaternary structure, microtubule inner protein component of sperm flagellar doublet microtubules.

It localises to the cytoplasm. The protein localises to the cytoskeleton. The protein resides in the cilium axoneme. Its subcellular location is the flagellum axoneme. Microtubule inner protein (MIP) part of the dynein-decorated doublet microtubules (DMTs) in cilia axoneme, which is required for motile cilia beating. This Mus musculus (Mouse) protein is RIB43A-like with coiled-coils protein 2.